The chain runs to 51 residues: Large ribosomal subunit protein eL39y (51 aa).

The disordered stretch occupies residues 1-21; sequence MPSHKSFMIKKKLGKKMRQNR. The span at 7–19 shows a compositional bias: basic residues; that stretch reads FMIKKKLGKKMRQ.

The protein belongs to the eukaryotic ribosomal protein eL39 family.

The chain is Large ribosomal subunit protein eL39y (RPL39B) from Arabidopsis thaliana (Mouse-ear cress).